We begin with the raw amino-acid sequence, 218 residues long: LexA repressor (218 aa).

The H-T-H motif DNA-binding region spans 28 to 48 (RAEIAAEFGFSSPNSAEEHLR). Catalysis depends on for autocatalytic cleavage activity residues S136 and K173.

This sequence belongs to the peptidase S24 family. Homodimer.

It carries out the reaction Hydrolysis of Ala-|-Gly bond in repressor LexA.. Functionally, represses a number of genes involved in the response to DNA damage (SOS response), including recA and lexA. In the presence of single-stranded DNA, RecA interacts with LexA causing an autocatalytic cleavage which disrupts the DNA-binding part of LexA, leading to derepression of the SOS regulon and eventually DNA repair. This is LexA repressor from Cupriavidus metallidurans (strain ATCC 43123 / DSM 2839 / NBRC 102507 / CH34) (Ralstonia metallidurans).